Consider the following 1254-residue polypeptide: MNYIPTQTFYGRRWRPRPAFRPWQVPMQPTPTMVTPMLQAPDLQAQQMQQLISAVSALTTKQNVKAPKGQRKQKQQKPKEKKEKQKKKPTXKKKQQQKPKPQAKKKKPGRRERMCMKIENDCIFEVKLDGKVTGYACLVGDKVMKPAHVKGTIDNPDLAKLTYKKSSKYDLECAQIPVHMKSDASKYTHEKPEGHYNWHHGAVQYSXGRFTIPTGAGKPGDSGRPIFDNKGRVVAIVLGGANEGARTALSVVTWTKDMVTRVTPEGTEEWSAALMMCILANTSFPCSSPPCYPCCYEKQPEQTLRMLEDNVNRPGYYELLEASMTCRNRSRHRRSVIEHFNVYKATRPYLAXCADCGDGYFCYSPVAIEKIRDEASDGMLKIQVSAQIGLDKAGTHAHTKMRYMAGHDVQESKRDSLRVYTSAACSIHGTMGHFIVAHCPPGDYLKXSFEDANSHVKACKVQYKHDPLPVGREKFVVRPHFGVELPCTSYQLTTAPTDEEIDMHTPPDIPDRTLLSQTAGNVKITAGGRTIRYNCTCGRDNVGTTSTDKTINTCKIDQCHAAVTSHDKWXFTSPFVPRADQTARKGKVHVPFPLTNVTCRVPLARAPDVTYGKKEVTLRLHPDHPTXFSYRSLGAVPHPYEEWVDKFSERIIPVTEEGIEYQWGNNPPVRLWAQLTTEGKPHGWPHEIIQYYYGLYPAATIAAVSGASLMALLTLAATCCMLATARRKCLTPYALTPGAVVPLTLGLLXCAPRANAASFAETMAYLWDENKTLFWMEXXXXXXALALLACCIKSLICCCKPFSFLVLLSLGASAKAYEHTATIPNVVGFPYKAHIERNXFSPMTLQLEVVXXSLEPTLNLEYITCEYKTVVPSPFIKCCGTSECSSKEQPDYQCKVYTGVYPFMWGGAYCFCDSENTQLSEAYVDRSDVCKHDHALAYKAHTASLKATIRISYGTINQTTEAFVNGEHAVNVGGSKFIFGPISTAWSPFDNKIVVYKDDVYNQDFPPYGSGQPGRFGDIQSRTVESKDLYANTALKLSRPSPGVVHVPYTQTPSGFKYWLKEKGSSLNTKAPFGCKIKTNPVRAMDCAVGSIPVSMDIPDSAFTRVVDAPAVTDLSCQVAVCTHSSDFGXVATLSYKTDKPGKCAVHSHSNVATLQEATVDVKEDGKVTVHFSXXSASPAFKVSVCDAKTTCTAACEPPKDHIVPYGASHNNQVFPDMSGTAMTWVQRMASGLGGLALIAVVVLVLVTCITMRR.

The interval 43–77 (LQAQQMQQLISAVSALTTKQNVKAPKGQRKQKQQK) is host transcription inhibition. The tract at residues 60 to 112 (TKQNVKAPKGQRKQKQQKPKEKKEKQKKKPTXKKKQQQKPKPQAKKKKPGRRE) is disordered. The short motif at 70–108 (QRKQKQQKPKEKKEKQKKKPTXKKKQQQKPKPQAKKKKP) is the Nuclear localization signal element. A compositionally biased stretch (basic residues) spans 84 to 110 (KQKKKPTXKKKQQQKPKPQAKKKKPGR). The binding to the viral RNA stretch occupies residues 95–123 (QQQKPKPQAKKKKPGRRERMCMKIENDCI). Residues 108 to 122 (PGRRERMCMKIENDC) are ribosome-binding. A disulfide bridge links cysteine 122 with cysteine 137. The Peptidase S3 domain occupies 122–270 (CIFEVKLDGK…RVTPEGTEEW (149 aa)). The active-site Charge relay system is the histidine 148. Positions 153–163 (IDNPDLAKLTY) match the Nuclear export signal motif. The segment at 164 to 169 (KKSSKY) is interaction with spike glycoprotein E2. Aspartate 170 serves as the catalytic Charge relay system. The dimerization of the capsid protein stretch occupies residues 192-202 (PEGHYNWHHGA). Serine 222 (charge relay system) is an active-site residue. The interval 228–232 (DNKGR) is dimerization of the capsid protein. Over 270–694 (WSAALMMCIL…PHEIIQYYYG (425 aa)) the chain is Extracellular. The functions as an uncleaved signal peptide for the precursor of protein E3/E2 stretch occupies residues 271 to 282 (SAALMMCILANT). 3 disulfides stabilise this stretch: cysteine 277–cysteine 286, cysteine 291–cysteine 295, and cysteine 294–cysteine 326. A glycan (N-linked (GlcNAc...) asparagine; by host) is linked at asparagine 281. Asparagine 328 carries N-linked (GlcNAc...) asparagine; by host glycosylation. 6 disulfide bridges follow: cysteine 353-cysteine 459, cysteine 356-cysteine 362, cysteine 425-cysteine 439, cysteine 487-cysteine 599, cysteine 535-cysteine 559, and cysteine 537-cysteine 554. Interaction with host Mxra8 receptor stretches follow at residues 360 to 363 (YFCY) and 396 to 398 (HAH). The segment at 518-521 (TAGN) is interaction with host Mxra8 receptor. Residue asparagine 534 is glycosylated (N-linked (GlcNAc...) asparagine; by host). The interaction with host Mxra8 receptor stretch occupies residues 550 to 556 (TINTCKI). N-linked (GlcNAc...) asparagine; by host glycosylation is present at asparagine 596. A helical transmembrane segment spans residues 695 to 715 (LYPAATIAAVSGASLMALLTL). Topologically, residues 716-756 (AATCCMLATARRKCLTPYALTPGAVVPLTLGLLXCAPRANA) are cytoplasmic. Cysteine 719 carries S-palmitoyl cysteine; by host lipidation. The tract at residues 724–728 (TARRK) is interaction with the capsid protein. Residues cysteine 729 and cysteine 750 are each lipidated (S-palmitoyl cysteine; by host). The segment at 729 to 749 (CLTPYALTPGAVVPLTLGLLX) is transient transmembrane before p62-6K protein processing. A disulfide bridge links cysteine 729 with cysteine 750. Residues 757-771 (ASFAETMAYLWDENK) lie on the Extracellular side of the membrane. The chain crosses the membrane as a helical span at residues 772-792 (TLFWMEXXXXXXALALLACCI). Residue lysine 793 is a topological domain, cytoplasmic. The chain crosses the membrane as a helical span at residues 794-814 (SLICCCKPFSFLVLLSLGASA). At 815–1231 (KAYEHTATIP…AMTWVQRMAS (417 aa)) the chain is on the extracellular side. 4 disulfides stabilise this stretch: cysteine 865–cysteine 930, cysteine 878–cysteine 910, cysteine 879–cysteine 912, and cysteine 884–cysteine 894. Residues 900 to 917 (VYPFMWGGAYCFCDSENT) form an E1 fusion peptide loop region. N-linked (GlcNAc...) asparagine; by host glycosylation occurs at asparagine 957. Cystine bridges form between cysteine 1075/cysteine 1087, cysteine 1117/cysteine 1192, cysteine 1122/cysteine 1196, and cysteine 1144/cysteine 1186. Residues 1232–1252 (GLGGLALIAVVVLVLVTCITM) traverse the membrane as a helical segment. The S-palmitoyl cysteine; by host moiety is linked to residue cysteine 1249. Residue cysteine 1249 is the site of S-stearoyl cysteine; by host attachment. Residues 1253–1254 (RR) lie on the Cytoplasmic side of the membrane.

As to quaternary structure, homodimer. Homomultimer. Interacts with host karyopherin KPNA4; this interaction allows the nuclear import of the viral capsid protein. Interacts with spike glycoprotein E2. Interacts with host IRAK1; the interaction leads to inhibition of IRAK1-dependent signaling. The precursor of protein E3/E2 and E1 form a heterodimer shortly after synthesis. In terms of assembly, the precursor of protein E3/E2 and E1 form a heterodimer shortly after synthesis. Processing of the precursor of protein E3/E2 into E2 and E3 results in a heterodimer of the spike glycoproteins E2 and E1. Spike at virion surface are constituted of a trimer of E2-E1 heterodimers. After target cell attachment and endocytosis, E1 change conformation to form homotrimers. Interacts with 6K protein. As to quaternary structure, interacts with spike glycoprotein E1. Processing of the precursor of protein E3/E2 into E2 and E3 results in a heterodimer of the spike glycoproteins E2 and E1. Spike at virion surface are constituted of a trimer of E2-E1 heterodimers. Interacts with 6K protein. Interacts with host MXRA8; this interaction mediates virus entry. Structural polyprotein: Specific enzymatic cleavages in vivo yield mature proteins. Capsid protein is auto-cleaved during polyprotein translation, unmasking a signal peptide at the N-terminus of the precursor of E3/E2. The remaining polyprotein is then targeted to the host endoplasmic reticulum, where host signal peptidase cleaves it into pE2, 6K and E1 proteins. pE2 is further processed to mature E3 and E2 by host furin in trans-Golgi vesicle. In terms of processing, palmitoylated via thioester bonds. These palmitoylations may induce disruption of the C-terminus transmembrane. This would result in the reorientation of E2 C-terminus from lumenal to cytoplasmic side. Post-translationally, N-glycosylated. Palmitoylated via thioester bonds.

It localises to the virion. Its subcellular location is the host cytoplasm. It is found in the host cell membrane. The protein resides in the host nucleus. The protein localises to the virion membrane. It localises to the host Golgi apparatus. Its subcellular location is the host trans-Golgi network. It is found in the host endoplasmic reticulum. It catalyses the reaction Autocatalytic release of the core protein from the N-terminus of the togavirus structural polyprotein by hydrolysis of a -Trp-|-Ser- bond.. In terms of biological role, forms an icosahedral capsid with a T=4 symmetry composed of 240 copies of the capsid protein surrounded by a lipid membrane through which penetrate 80 spikes composed of trimers of E1-E2 heterodimers. The capsid protein binds to the viral RNA genome at a site adjacent to a ribosome binding site for viral genome translation following genome release. Possesses a protease activity that results in its autocatalytic cleavage from the nascent structural protein. Following its self-cleavage, the capsid protein transiently associates with ribosomes, and within several minutes the protein binds to viral RNA and rapidly assembles into icosahedric core particles. The resulting nucleocapsid eventually associates with the cytoplasmic domain of the spike glycoprotein E2 at the cell membrane, leading to budding and formation of mature virions. In case of infection, new virions attach to target cells and after clathrin-mediated endocytosis their membrane fuses with the host endosomal membrane. This leads to the release of the nucleocapsid into the cytoplasm, followed by an uncoating event necessary for the genomic RNA to become accessible. The uncoating might be triggered by the interaction of capsid proteins with ribosomes. Binding of ribosomes would release the genomic RNA since the same region is genomic RNA-binding and ribosome-binding. Specifically inhibits interleukin-1 receptor-associated kinase 1/IRAK1-dependent signaling during viral entry, representing a means by which the alphaviruses may evade innate immune detection and activation prior to viral gene expression. Functionally, provides the signal sequence for the translocation of the precursor of protein E3/E2 to the host endoplasmic reticulum. Furin-cleaved E3 remains associated with spike glycoprotein E1 and mediates pH protection of the latter during the transport via the secretory pathway. After virion release from the host cell, the assembly protein E3 is gradually released in the extracellular space. Plays a role in viral attachment to target host cell, by binding to the cell receptor MXRA8. The host LDLR may also act as a cell receptor for viral entry. Synthesized as a p62 precursor which is processed by furin at the cell membrane just before virion budding, giving rise to E2-E1 heterodimer. The p62-E1 heterodimer is stable, whereas E2-E1 is unstable and dissociate at low pH. p62 is processed at the last step, presumably to avoid E1 fusion activation before its final export to cell surface. E2 C-terminus contains a transitory transmembrane that would be disrupted by palmitoylation, resulting in reorientation of the C-terminal tail from lumenal to cytoplasmic side. This step is critical since E2 C-terminus is involved in budding by interacting with capsid proteins. This release of E2 C-terminus in cytoplasm occurs lately in protein export, and precludes premature assembly of particles at the endoplasmic reticulum membrane. Its function is as follows. Acts as a viroporin that participates in virus glycoprotein processing and transport to the plasma membrane, cell permeabilization and budding of viral particles. The cation channel is permeable to Na(+)&gt;K(+)&gt;Ca(2+) in vitro. Disrupts the calcium homeostasis of the cell, probably at the endoplasmic reticulum level. This leads to cytoplasmic calcium elevation. Because of its lipophilic properties, the 6K protein is postulated to influence the selection of lipids that interact with the transmembrane domains of the glycoproteins, which, in turn, affects the deformability of the bilayer required for the extreme curvature that occurs as budding proceeds. Present in low amount in virions, about 3% compared to viral glycoproteins. In terms of biological role, class II viral fusion protein. Fusion activity is inactive as long as E1 is bound to E2 in mature virion. After virus attachment to target cell via host MXRA8 and endocytosis, acidification of the endosome induce dissociation of E1/E2 heterodimer and concomitant trimerization of the E1 subunits. This E1 trimer is fusion active, and promotes release of viral nucleocapsid in cytoplasm after endosome and viral membrane fusion. Efficient fusion requires the presence of cholesterol and sphingolipid in the target membrane. This is Structural polyprotein from Ross river virus (strain NB5092) (RRV).